The primary structure comprises 453 residues: Vitamin D3 receptor A (453 aa).

Positions 53 to 128 form a DNA-binding region, nuclear receptor; the sequence is PRICGVCGDK…IGMMKEFILT (76 aa). Zn(2+) contacts are provided by Cys-56, Cys-59, Cys-73, Cys-76, Cys-92, Cys-98, Cys-108, and Cys-111. 2 consecutive NR C4-type zinc fingers follow at residues 56-76 and 92-111; these read CGVCGDKATGFHFNAMTCEGC and CPFNGNCTITKDNRRHCQAC. Positions 129–158 are hinge; that stretch reads DEEVQRKKDLIMKRKEEEAAREARKPRLSD. The region spanning 159–449 is the NR LBD domain; that stretch reads EQMQIINSLV…LTPLVLEVFG (291 aa). Calcitriol-binding residues include Tyr-175 and Ser-265. The segment at 274–292 is interaction with coactivator LXXLL motif; it reads KMIPGFRDLTAEDQIALLK. Positions 302, 306, 333, and 423 each coordinate calcitriol. Residues 442-450 carry the 9aaTAD motif; it reads PLVLEVFGS.

This sequence belongs to the nuclear hormone receptor family. NR1 subfamily. In terms of assembly, homodimer in the absence of bound vitamin D3. Heterodimer with RXRA after vitamin D3 binding. Interacts with ncoa1 and possibly other coactivators, leading to a strong increase of transcription of target genes. Detected in embryo 24 to 48 hours after fertilization and in gastrula.

Its subcellular location is the nucleus. The protein localises to the cytoplasm. Nuclear receptor for calcitriol, the active form of vitamin D3 which mediates the action of this vitamin on cells. Enters the nucleus upon vitamin D3 binding where it forms heterodimers with the retinoid X receptor/RXR. The VDR-RXR heterodimers bind to specific response elements on DNA and activate the transcription of vitamin D3-responsive target genes. Recruited to promoters via its interaction with BAZ1B/WSTF which mediates the interaction with acetylated histones, an essential step for VDR-promoter association. Plays a central role in calcium homeostasis. The polypeptide is Vitamin D3 receptor A (vdra) (Danio rerio (Zebrafish)).